Here is a 319-residue protein sequence, read N- to C-terminus: Probable secreted beta-glucosidase C2G2.17c (319 aa).

The first 19 residues, 1-19 (MLFNNFLCFAVSAIPLVSA), serve as a signal peptide directing secretion. N-linked (GlcNAc...) asparagine glycans are attached at residues N36, N39, N45, N48, and N221.

It belongs to the SUN family.

The protein localises to the secreted. Cell surface beta-glucosidase involved in cell wall biogenesis. This chain is Probable secreted beta-glucosidase C2G2.17c, found in Schizosaccharomyces pombe (strain 972 / ATCC 24843) (Fission yeast).